We begin with the raw amino-acid sequence, 971 residues long: Isoleucine--tRNA ligase (971 aa).

Positions 60–70 (PYANGDLHIGH) match the 'HIGH' region motif. Glu-563 contacts L-isoleucyl-5'-AMP. The short motif at 604–608 (KMSKS) is the 'KMSKS' region element. Lys-607 lines the ATP pocket. Zn(2+) contacts are provided by Cys-922, Cys-925, Cys-942, and Cys-945.

The protein belongs to the class-I aminoacyl-tRNA synthetase family. IleS type 1 subfamily. As to quaternary structure, monomer. It depends on Zn(2+) as a cofactor.

It is found in the cytoplasm. The catalysed reaction is tRNA(Ile) + L-isoleucine + ATP = L-isoleucyl-tRNA(Ile) + AMP + diphosphate. Its function is as follows. Catalyzes the attachment of isoleucine to tRNA(Ile). As IleRS can inadvertently accommodate and process structurally similar amino acids such as valine, to avoid such errors it has two additional distinct tRNA(Ile)-dependent editing activities. One activity is designated as 'pretransfer' editing and involves the hydrolysis of activated Val-AMP. The other activity is designated 'posttransfer' editing and involves deacylation of mischarged Val-tRNA(Ile). This Acaryochloris marina (strain MBIC 11017) protein is Isoleucine--tRNA ligase.